A 227-amino-acid chain; its full sequence is Phosphoribosylformylglycinamidine synthase subunit PurQ (227 aa).

The Glutamine amidotransferase type-1 domain maps to 2-226 (KFAVIQFPGS…VKAWKEEQVN (225 aa)). Catalysis depends on Cys86, which acts as the Nucleophile. Residues His195 and Glu197 contribute to the active site.

Part of the FGAM synthase complex composed of 1 PurL, 1 PurQ and 2 PurS subunits.

Its subcellular location is the cytoplasm. It carries out the reaction N(2)-formyl-N(1)-(5-phospho-beta-D-ribosyl)glycinamide + L-glutamine + ATP + H2O = 2-formamido-N(1)-(5-O-phospho-beta-D-ribosyl)acetamidine + L-glutamate + ADP + phosphate + H(+). The enzyme catalyses L-glutamine + H2O = L-glutamate + NH4(+). It functions in the pathway purine metabolism; IMP biosynthesis via de novo pathway; 5-amino-1-(5-phospho-D-ribosyl)imidazole from N(2)-formyl-N(1)-(5-phospho-D-ribosyl)glycinamide: step 1/2. Part of the phosphoribosylformylglycinamidine synthase complex involved in the purines biosynthetic pathway. Catalyzes the ATP-dependent conversion of formylglycinamide ribonucleotide (FGAR) and glutamine to yield formylglycinamidine ribonucleotide (FGAM) and glutamate. The FGAM synthase complex is composed of three subunits. PurQ produces an ammonia molecule by converting glutamine to glutamate. PurL transfers the ammonia molecule to FGAR to form FGAM in an ATP-dependent manner. PurS interacts with PurQ and PurL and is thought to assist in the transfer of the ammonia molecule from PurQ to PurL. The sequence is that of Phosphoribosylformylglycinamidine synthase subunit PurQ from Listeria monocytogenes serovar 1/2a (strain ATCC BAA-679 / EGD-e).